Reading from the N-terminus, the 221-residue chain is Anti-sigma-W factor RsiW (221 aa).

The Cytoplasmic segment spans residues 1 to 87 (MKTCHSHDEL…AKWKLKAKRH (87 aa)). Residues histidine 30, cysteine 34, and cysteine 37 each coordinate Zn(2+). The chain crosses the membrane as a helical span at residues 88 to 108 (PILVAAAIFLIMMSAAFFSAW). At 109–221 (SHTTDGIAVS…GEDDPHSTDN (113 aa)) the chain is on the extracellular side.

The protein belongs to the zinc-associated anti-sigma factor (ZAS) superfamily. Anti-sigma-W factor family. Zn(2+) is required as a cofactor. Is processed by three successive proteolytic events. First, the extracellular region of RsiW is cleaved by PrsW (Site-1 cleavage) in response to cell envelope stresses. Next, it undergoes cleavage at an intramembrane site (Site-2 cleavage) mediated by RasP. This cleavage uncovers a cryptic proteolytic tag with conserved alanine residues in the transmembrane segment, that is recognized mainly by the ClpXP protease, which completely degrades the protein in the cytoplasm and leads to the induction of the sigma-W-controlled genes.

It is found in the membrane. In terms of biological role, is the anti-sigma factor for SigW. The presence of RsiW leads to the inactivation of SigW, and its proteolytic destruction to sigma-W activation. In Shouchella clausii (strain KSM-K16) (Alkalihalobacillus clausii), this protein is Anti-sigma-W factor RsiW (rsiW).